Reading from the N-terminus, the 228-residue chain is DOPA 4,5-dioxygenase (228 aa).

Homodimer. In terms of tissue distribution, expressed at high level in coloured cap tissue and at least 10 times lower level in the stipe.

The protein localises to the cytoplasm. It functions in the pathway pigment biosynthesis; betalain biosynthesis. Functionally, extradiol dioxygenase that opens up the cyclic ring of DOPA between carbons 4 and 5 thus producing an unstable seco-DOPA that rearranges non-enzymatically to betalamic acid. Can also catalyze the formation of muscaflavin (a pigment found in the hygrocybe mushrooms family and of some amanita species only) by a 2,3-extradiol cleavage of DOPA. The polypeptide is DOPA 4,5-dioxygenase (DODA) (Amanita muscaria (Fly agaric)).